Here is a 268-residue protein sequence, read N- to C-terminus: Tryptophan synthase alpha chain (268 aa).

Catalysis depends on proton acceptor residues Glu47 and Asp58.

The protein belongs to the TrpA family. As to quaternary structure, tetramer of two alpha and two beta chains.

It catalyses the reaction (1S,2R)-1-C-(indol-3-yl)glycerol 3-phosphate + L-serine = D-glyceraldehyde 3-phosphate + L-tryptophan + H2O. It functions in the pathway amino-acid biosynthesis; L-tryptophan biosynthesis; L-tryptophan from chorismate: step 5/5. Its function is as follows. The alpha subunit is responsible for the aldol cleavage of indoleglycerol phosphate to indole and glyceraldehyde 3-phosphate. This is Tryptophan synthase alpha chain from Chlorobium phaeobacteroides (strain BS1).